The chain runs to 334 residues: ADP-L-glycero-D-manno-heptose-6-epimerase (334 aa).

NADP(+) is bound by residues 11 to 12 (FI), 32 to 33 (DN), Lys-39, Lys-54, 77 to 81 (QGACS), and Asn-94. The active-site Proton acceptor is Tyr-141. Lys-145 lines the NADP(+) pocket. Asn-171 contacts substrate. NADP(+) contacts are provided by Val-172 and Lys-180. The active-site Proton acceptor is Lys-180. Substrate is bound by residues Arg-182, His-189, 203–206 (FGSN), Arg-216, and Tyr-295.

This sequence belongs to the NAD(P)-dependent epimerase/dehydratase family. HldD subfamily. In terms of assembly, homopentamer. The cofactor is NADP(+).

It carries out the reaction ADP-D-glycero-beta-D-manno-heptose = ADP-L-glycero-beta-D-manno-heptose. It participates in nucleotide-sugar biosynthesis; ADP-L-glycero-beta-D-manno-heptose biosynthesis; ADP-L-glycero-beta-D-manno-heptose from D-glycero-beta-D-manno-heptose 7-phosphate: step 4/4. It functions in the pathway bacterial outer membrane biogenesis; LOS core biosynthesis. Functionally, catalyzes the interconversion between ADP-D-glycero-beta-D-manno-heptose and ADP-L-glycero-beta-D-manno-heptose via an epimerization at carbon 6 of the heptose. The chain is ADP-L-glycero-D-manno-heptose-6-epimerase from Neisseria meningitidis serogroup B (strain ATCC BAA-335 / MC58).